Consider the following 150-residue polypeptide: Large ribosomal subunit protein bL9 (150 aa).

This sequence belongs to the bacterial ribosomal protein bL9 family.

Its function is as follows. Binds to the 23S rRNA. In Streptococcus gordonii (strain Challis / ATCC 35105 / BCRC 15272 / CH1 / DL1 / V288), this protein is Large ribosomal subunit protein bL9.